The primary structure comprises 330 residues: Membrane-associated protein VIPP1, chloroplastic (330 aa).

The transit peptide at 1-64 directs the protein to the chloroplast; that stretch reads MALKASPVTG…LRLACDNRLR (64 aa). 2 coiled-coil regions span residues 124-259 and 312-329; these read SQKQ…LTQI and KDSE…KAND. The tract at residues 287–312 is disordered; it reads LSGSSKKGELPPGRSTVAASTRYPFK.

The protein belongs to the PspA/Vipp/IM30 family. In terms of assembly, homomultimer. Complex formation involves interaction via the central alpha-helical domain (71-286).

Its subcellular location is the plastid. The protein localises to the chloroplast inner membrane. It localises to the chloroplast thylakoid membrane. In terms of biological role, required for plastid vesicle formation and thylakoid membrane biogenesis, but not for functional assembly of thylakoid protein complexes. This chain is Membrane-associated protein VIPP1, chloroplastic, found in Arabidopsis thaliana (Mouse-ear cress).